Here is a 214-residue protein sequence, read N- to C-terminus: Adenylate kinase (214 aa).

Position 10–15 (10–15) interacts with ATP; the sequence is GAGKGT. The tract at residues 30–59 is NMP; that stretch reads STGDMLRAAVKAGTPLGLEAKKVMDAGQLV. AMP-binding positions include threonine 31, arginine 36, 57–59, 85–88, and glutamine 92; these read QLV and GFPR. The LID stretch occupies residues 122–159; it reads GRRVHPGSGRVYHIVFNQPKVEGKDDVTGEDLAIRPDD. ATP is bound by residues arginine 123 and 132-133; that span reads VY. Residues arginine 156 and arginine 167 each contribute to the AMP site. Glutamine 200 is a binding site for ATP.

The protein belongs to the adenylate kinase family. Monomer.

The protein resides in the cytoplasm. It catalyses the reaction AMP + ATP = 2 ADP. It participates in purine metabolism; AMP biosynthesis via salvage pathway; AMP from ADP: step 1/1. In terms of biological role, catalyzes the reversible transfer of the terminal phosphate group between ATP and AMP. Plays an important role in cellular energy homeostasis and in adenine nucleotide metabolism. This is Adenylate kinase from Shewanella woodyi (strain ATCC 51908 / MS32).